The primary structure comprises 633 residues: Lysophospholipase 1 (633 aa).

Positions 1–20 (MKTTTVACAVAGLLFSCVSG) are cleaved as a signal peptide. The 548-residue stretch at 47 to 594 (GCPASRPTIR…QRYCWDGSLN (548 aa)) folds into the PLA2c domain. Asn-64, Asn-104, Asn-139, Asn-173, Asn-246, Asn-290, Asn-329, Asn-358, Asn-397, Asn-450, Asn-463, Asn-469, Asn-497, Asn-500, Asn-521, Asn-549, Asn-555, and Asn-594 each carry an N-linked (GlcNAc...) asparagine glycan. Ser-609 carries the GPI-like-anchor amidated serine lipid modification. Residues 610 to 633 (AASGIIPSISTVAMAVVFAAWTIF) constitute a propeptide, removed in mature form.

It belongs to the lysophospholipase family. The GPI-like anchor contains a phosphoceramide lipid group. The anchor position has not been determined.

It localises to the cell membrane. The enzyme catalyses a 1-acyl-sn-glycero-3-phosphocholine + H2O = sn-glycerol 3-phosphocholine + a fatty acid + H(+). Functionally, catalyzes the release of fatty acids from lysophospholipids. The polypeptide is Lysophospholipase 1 (plb1) (Aspergillus fumigatus (strain CBS 144.89 / FGSC A1163 / CEA10) (Neosartorya fumigata)).